The sequence spans 256 residues: Thiazole synthase (256 aa).

Residue Lys95 is the Schiff-base intermediate with DXP of the active site. 1-deoxy-D-xylulose 5-phosphate contacts are provided by residues Gly156, 182–183, and 204–205; these read AG and NT.

The protein belongs to the ThiG family. As to quaternary structure, homotetramer. Forms heterodimers with either ThiH or ThiS.

It localises to the cytoplasm. The enzyme catalyses [ThiS sulfur-carrier protein]-C-terminal-Gly-aminoethanethioate + 2-iminoacetate + 1-deoxy-D-xylulose 5-phosphate = [ThiS sulfur-carrier protein]-C-terminal Gly-Gly + 2-[(2R,5Z)-2-carboxy-4-methylthiazol-5(2H)-ylidene]ethyl phosphate + 2 H2O + H(+). It participates in cofactor biosynthesis; thiamine diphosphate biosynthesis. Functionally, catalyzes the rearrangement of 1-deoxy-D-xylulose 5-phosphate (DXP) to produce the thiazole phosphate moiety of thiamine. Sulfur is provided by the thiocarboxylate moiety of the carrier protein ThiS. In vitro, sulfur can be provided by H(2)S. This is Thiazole synthase from Salmonella paratyphi A (strain ATCC 9150 / SARB42).